The sequence spans 180 residues: ATP synthase subunit delta (180 aa).

This sequence belongs to the ATPase delta chain family. F-type ATPases have 2 components, F(1) - the catalytic core - and F(0) - the membrane proton channel. F(1) has five subunits: alpha(3), beta(3), gamma(1), delta(1), epsilon(1). F(0) has three main subunits: a(1), b(2) and c(10-14). The alpha and beta chains form an alternating ring which encloses part of the gamma chain. F(1) is attached to F(0) by a central stalk formed by the gamma and epsilon chains, while a peripheral stalk is formed by the delta and b chains.

It localises to the cell inner membrane. F(1)F(0) ATP synthase produces ATP from ADP in the presence of a proton or sodium gradient. F-type ATPases consist of two structural domains, F(1) containing the extramembraneous catalytic core and F(0) containing the membrane proton channel, linked together by a central stalk and a peripheral stalk. During catalysis, ATP synthesis in the catalytic domain of F(1) is coupled via a rotary mechanism of the central stalk subunits to proton translocation. In terms of biological role, this protein is part of the stalk that links CF(0) to CF(1). It either transmits conformational changes from CF(0) to CF(1) or is implicated in proton conduction. This chain is ATP synthase subunit delta, found in Geobacter sp. (strain M21).